We begin with the raw amino-acid sequence, 66 residues long: U1-theraphotoxin-Cg1a 1 (66 aa).

Positions 1–21 are cleaved as a signal peptide; that stretch reads MKTSALFVIFGLVLLFCNSFA. A propeptide spanning residues 22–29 is cleaved from the precursor; sequence AELKTTGR. Disulfide bonds link C31–C46, C38–C51, and C45–C58. Proline amide is present on P63.

This sequence belongs to the neurotoxin 10 (Hwtx-1) family. 46 (Jztx-7/10/12) subfamily. As to expression, expressed by the venom gland.

It is found in the secreted. Probable ion channel inhibitor. This chain is U1-theraphotoxin-Cg1a 1, found in Chilobrachys guangxiensis (Chinese earth tiger tarantula).